Reading from the N-terminus, the 450-residue chain is tRNA modification GTPase MnmE (450 aa).

(6S)-5-formyl-5,6,7,8-tetrahydrofolate contacts are provided by arginine 23, glutamate 79, and lysine 118. Positions 214–374 (GITLILVGKP…LKEHILNKVG (161 aa)) constitute a TrmE-type G domain. Residue asparagine 224 coordinates K(+). GTP contacts are provided by residues 224–229 (NAGKSS), 243–249 (TSIAGTT), and 268–271 (DTAG). Residue serine 228 coordinates Mg(2+). The K(+) site is built by threonine 243, isoleucine 245, and threonine 248. Threonine 249 lines the Mg(2+) pocket. A (6S)-5-formyl-5,6,7,8-tetrahydrofolate-binding site is contributed by lysine 450.

Belongs to the TRAFAC class TrmE-Era-EngA-EngB-Septin-like GTPase superfamily. TrmE GTPase family. In terms of assembly, homodimer. Heterotetramer of two MnmE and two MnmG subunits. K(+) serves as cofactor.

It localises to the cytoplasm. Functionally, exhibits a very high intrinsic GTPase hydrolysis rate. Involved in the addition of a carboxymethylaminomethyl (cmnm) group at the wobble position (U34) of certain tRNAs, forming tRNA-cmnm(5)s(2)U34. This is tRNA modification GTPase MnmE from Francisella tularensis subsp. tularensis (strain FSC 198).